Reading from the N-terminus, the 288-residue chain is Polyamine aminopropyltransferase (288 aa).

Positions 9 to 238 (ETLHDQFGQY…GIMTFAWATD (230 aa)) constitute a PABS domain. Glutamine 33 contributes to the S-methyl-5'-thioadenosine binding site. Spermidine-binding residues include histidine 64 and aspartate 88. S-methyl-5'-thioadenosine is bound by residues glutamate 108 and 140–141 (DG). The active-site Proton acceptor is the aspartate 158. A spermidine-binding site is contributed by 158–161 (DCTD). Position 165 (proline 165) interacts with S-methyl-5'-thioadenosine.

Belongs to the spermidine/spermine synthase family. Homodimer or homotetramer.

It is found in the cytoplasm. It catalyses the reaction S-adenosyl 3-(methylsulfanyl)propylamine + putrescine = S-methyl-5'-thioadenosine + spermidine + H(+). Its pathway is amine and polyamine biosynthesis; spermidine biosynthesis; spermidine from putrescine: step 1/1. Catalyzes the irreversible transfer of a propylamine group from the amino donor S-adenosylmethioninamine (decarboxy-AdoMet) to putrescine (1,4-diaminobutane) to yield spermidine. The sequence is that of Polyamine aminopropyltransferase from Escherichia coli O17:K52:H18 (strain UMN026 / ExPEC).